Reading from the N-terminus, the 406-residue chain is RNA exonuclease 4 (406 aa).

Over residues 1 to 10 the composition is skewed to polar residues; that stretch reads MAPELSSNWK. 2 disordered regions span residues 1 to 108 and 156 to 181; these read MAPE…TLPS and AGLT…PTDL. Low complexity-rich tracts occupy residues 54-64, 72-82, and 94-108; these read SQQQQQASNPS, SQTQSQPSSQK, and SKPT…TLPS. Polar residues predominate over residues 162-173; that stretch reads GHSSSSPKSNKN. The region spanning 216–367 is the Exonuclease domain; the sequence is YLSIDCEMVG…EDARVAMLLF (152 aa). Over residues 377-387 the composition is skewed to basic and acidic residues; the sequence is ENSNRYEEGQA. A disordered region spans residues 377–406; the sequence is ENSNRYEEGQAKKGGNGGGGGGGKKKKGKK. Residues 388–398 are compositionally biased toward gly residues; the sequence is KKGGNGGGGGG.

Belongs to the REXO4 family.

It is found in the nucleus. Its function is as follows. Exoribonuclease involved in ribosome biosynthesis. Involved in the processing of ITS1, the internal transcribed spacer localized between the 18S and 5.8S rRNAs. The chain is RNA exonuclease 4 (rex-4) from Neurospora crassa (strain ATCC 24698 / 74-OR23-1A / CBS 708.71 / DSM 1257 / FGSC 987).